Reading from the N-terminus, the 117-residue chain is MYQSINKLLLQHQKKYLRYVDTTDYSSENLDLDQFSYFIITINKTDKCILIEQFCYNAEGHIYSIFFKGPTAKHLSSIICHFQQLNTIISTAHAIYLGRELMKSELALVLDQQYIQD.

The protein belongs to the ycf91 family.

The protein resides in the plastid. Its subcellular location is the chloroplast. This is an uncharacterized protein from Pyropia yezoensis (Susabi-nori).